Consider the following 518-residue polypeptide: Probable protein phosphatase 2C 14 (518 aa).

Low complexity-rich tracts occupy residues 1 to 10 (MVEAAAGRRS) and 86 to 105 (PQRQ…APGA). Disordered stretches follow at residues 1-31 (MVEA…QQHQ) and 86-108 (PQRQ…ADGR). Positions 129–437 (VASLYTLQGK…DDCAVVCLFL (309 aa)) constitute a PPM-type phosphatase domain. Mn(2+) contacts are provided by Asp-165 and Gly-166. Residues 192–222 (TDEGRQTSTSSIKSNGDETGSPGNMGRDAEQ) form a disordered region. Positions 197 to 213 (QTSTSSIKSNGDETGSP) are enriched in polar residues. The Mn(2+) site is built by Asp-382 and Asp-428.

It belongs to the PP2C family. Requires Mg(2+) as cofactor. Mn(2+) serves as cofactor.

It catalyses the reaction O-phospho-L-seryl-[protein] + H2O = L-seryl-[protein] + phosphate. It carries out the reaction O-phospho-L-threonyl-[protein] + H2O = L-threonyl-[protein] + phosphate. This Oryza sativa subsp. japonica (Rice) protein is Probable protein phosphatase 2C 14.